We begin with the raw amino-acid sequence, 405 residues long: CMP-sialic acid transporter 3 (405 aa).

Residues 1-39 (MKNGIAECPACHSKLVSPGSKTISRAYDDHKIRVSSKQR) are Cytoplasmic-facing. A helical transmembrane segment spans residues 40–60 (VLNVLLVVGDCMLVGLQPVLV). The Lumenal portion of the chain corresponds to 61–73 (YMSKVDGKFNFSP). A helical membrane pass occupies residues 74–94 (ISVNFLTEIAKVIFAIVMLLI). At 95–142 (QARHQKVGEKPLLSVSTFVQAARNNVLLAVPALLYAINNYLKFTMQLY) the chain is on the cytoplasmic side. Residues 143-163 (FNPATVKMLSNLKVLVIAVLL) form a helical membrane-spanning segment. Residues 164–170 (KMVMKRR) are Lumenal-facing. Residues 171–191 (FSIIQWEALALLLIGISVNQL) form a helical membrane-spanning segment. The Cytoplasmic segment spans residues 192–199 (RSLPEGAT). A helical membrane pass occupies residues 200 to 220 (AIGIPLATGAYVCTVIFVTVP). At 221 to 243 (SMASVFNEYALKSQYDTSIYLQN) the chain is on the lumenal side. A helical membrane pass occupies residues 244 to 264 (LFLYGYGAIFNFLGILGTVIY). The Cytoplasmic segment spans residues 265–280 (KGPGSFDILQGHSRAT). The helical transmembrane segment at 281-301 (MFLILNNAAQGILSSFFFKYA) threads the bilayer. Residues 302 to 321 (DTILKKYSSTVATIFTGIAS) lie on the Lumenal side of the membrane. The chain crosses the membrane as a helical span at residues 322–342 (AALFGHVITMNFLLGISIVFI). At 343–405 (SMHQFFSPLA…SDDRTPLLPR (63 aa)) the chain is on the cytoplasmic side. Positions 385–405 (GANEEASHRGESDDRTPLLPR) are disordered. Residues 389 to 405 (EASHRGESDDRTPLLPR) are compositionally biased toward basic and acidic residues.

The protein belongs to the nucleotide-sugar transporter family. CMP-Sialate:CMP antiporter (TC 2.A.7.12) subfamily.

The protein resides in the golgi apparatus membrane. Sugar transporter involved in the transport of CMP-sialic acid from the cytoplasm into the Golgi. The protein is CMP-sialic acid transporter 3 (UTR6) of Arabidopsis thaliana (Mouse-ear cress).